The chain runs to 124 residues: Large ribosomal subunit protein bL12 (124 aa).

The protein belongs to the bacterial ribosomal protein bL12 family. In terms of assembly, homodimer. Part of the ribosomal stalk of the 50S ribosomal subunit. Forms a multimeric L10(L12)X complex, where L10 forms an elongated spine to which 2 to 4 L12 dimers bind in a sequential fashion. Binds GTP-bound translation factors.

Its function is as follows. Forms part of the ribosomal stalk which helps the ribosome interact with GTP-bound translation factors. Is thus essential for accurate translation. In Burkholderia thailandensis (strain ATCC 700388 / DSM 13276 / CCUG 48851 / CIP 106301 / E264), this protein is Large ribosomal subunit protein bL12.